A 132-amino-acid polypeptide reads, in one-letter code: uncharacterized protein (132 aa).

Residues 45-115 (VHMEKHKLKI…VVIVTTAEGK (71 aa)) enclose the BIG2 domain.

To B.anthracis BA1245.

This is an uncharacterized protein from Bacillus cereus (strain ATCC 14579 / DSM 31 / CCUG 7414 / JCM 2152 / NBRC 15305 / NCIMB 9373 / NCTC 2599 / NRRL B-3711).